The sequence spans 797 residues: MTRSASATAGLTDAEVAQRVAEGKSNDIPERVTRTVGQIVRANVFTRINAILGVLLLIVLATGSLINGMFGLLIIANSVIGMVQEIRAKQTLDKLAIIGQAKPLVRRQSGTRTRSTNEVVLDDIIELGPGDQVVVDGEVVEEENLEIDESLLTGEADPIAKDAGDTVMSGSFVVSGAGAYRATKVGSEAYAAKLAAEASKFTLVKSELRNGINRILQFITYLLVPAGLLTIYTQLFTTHVGWRESVLRMVGALVPMVPEGLVLMTSIAFAVGVVRLGQRQCLVQELPAIEGLARVDVVCADKTGTLTESGMRVCEVEELDGAGRQESVADVLAALAAADARPNASMQAIAEAFHSPPGWVVAANAPFKSATKWSGVSFRDHGNWVIGAPDVLLDPASVAARQAERIGAQGLRVLLLAAGSVAVDHAQAPGQVTPVALVVLEQKVRPDARETLDYFAVQNVSVKVISGDNAVSVGAVADRLGLHGEAMDARALPTGREELADTLDSYTSFGRVRPDQKRAIVHALQSHGHTVAMTGDGVNDVLALKDADIGVAMGSGSPASRAVAQIVLLNNRFATLPHVVGEGRRVIGNIERVANLFLTKTVYSVLLALLVGIECLIAIPLRRDPLLFPFQPIHVTIAAWFTIGIPAFILSLAPNNERAYPGFVRRVMTSAVPFGLVIGVATFVTYLAAYQGRYASWQEQEQASTAALITLLMTALWVLAVIARPYQWWRLALVLPSGLAYVVIFSLPLAREKFLLDASNLATTSIALAVGVVGAATIEAMWWIRSRMLGVKPRVWR.

The next 3 membrane-spanning stretches (helical) occupy residues 55 to 75 (LLLI…LLII), 215 to 235 (ILQF…YTQL), and 254 to 274 (VPMV…VGVV). Residue Asp301 is the 4-aspartylphosphate intermediate of the active site. Residues Asp301, Thr303, and Asp536 each coordinate Mg(2+). The next 6 helical transmembrane spans lie at 601-621 (TVYS…AIPL), 633-653 (IHVT…LSLA), 667-687 (VMTS…VTYL), 703-723 (ASTA…AVIA), 729-749 (WRLA…SLPL), and 764-784 (TSIA…MWWI).

Belongs to the cation transport ATPase (P-type) (TC 3.A.3) family.

Its subcellular location is the cell membrane. It carries out the reaction Ca(2+)(in) + ATP + H2O = Ca(2+)(out) + ADP + phosphate + H(+). Functionally, P-type ATPase involved in specific uptake of calcium. The protein is Calcium-transporting ATPase CtpE (ctpE) of Mycobacterium tuberculosis (strain CDC 1551 / Oshkosh).